The following is a 569-amino-acid chain: 4-hydroxy-7-methoxy-3-oxo-3,4-dihydro-2H-1,4-benzoxazin-2-yl glucoside beta-D-glucosidase 1a, chloroplastic (569 aa).

A chloroplast-targeting transit peptide spans 1 to 50 (MALLAAATLNPTTHLSLRSRAGRNSENLWLRSAASSQKSKGRFCNLTIRA). Residues Gln-92, His-194, and 239–240 (NE) each bind a beta-D-glucoside. Catalysis depends on Glu-240, which acts as the Proton donor. Residues Cys-259 and Cys-265 are joined by a disulfide bond. A beta-D-glucoside is bound by residues Tyr-383, Glu-456, Trp-504, 511-512 (EW), and Phe-520. Glu-456 acts as the Nucleophile in catalysis.

It belongs to the glycosyl hydrolase 1 family. In terms of assembly, homo- and heterohexamers. Expressed in young seedlings early after germination.

The protein localises to the plastid. The protein resides in the chloroplast. The enzyme catalyses Hydrolysis of terminal, non-reducing beta-D-glucosyl residues with release of beta-D-glucose.. It catalyses the reaction DIMBOA beta-D-glucoside + H2O = DIMBOA + D-glucose. It carries out the reaction DIBOA beta-D-glucoside + H2O = DIBOA + D-glucose. Its function is as follows. Acts in defense of young plant parts against pests via the production of hydroxamic acids from hydroxamic acid glucosides. Enzymatic activity is highly correlated with plant growth. The preferred substrate is DIMBOA-beta-D-glucoside. This chain is 4-hydroxy-7-methoxy-3-oxo-3,4-dihydro-2H-1,4-benzoxazin-2-yl glucoside beta-D-glucosidase 1a, chloroplastic (GLU1A), found in Triticum aestivum (Wheat).